The primary structure comprises 96 residues: Large ribosomal subunit protein uL23 (96 aa).

The protein belongs to the universal ribosomal protein uL23 family. In terms of assembly, part of the 50S ribosomal subunit. Contacts protein L29, and trigger factor when it is bound to the ribosome.

One of the early assembly proteins it binds 23S rRNA. One of the proteins that surrounds the polypeptide exit tunnel on the outside of the ribosome. Forms the main docking site for trigger factor binding to the ribosome. The protein is Large ribosomal subunit protein uL23 of Solidesulfovibrio magneticus (strain ATCC 700980 / DSM 13731 / RS-1) (Desulfovibrio magneticus).